We begin with the raw amino-acid sequence, 473 residues long: LEC14B protein (473 aa).

WD repeat units lie at residues 212-242 (GYSFGVFSIKFSTDGREIVAGTSDESICVYD), 254-285 (AHESDVNSVCFADESGHLIYSGSDDNLCKVWD), 301-331 (GHLEGITFIDSRGDGRYFISNGKDQTIKLWD), 377-413 (GHSVLCTLIRCYFSPDYSTGQKYIYTGSHDANVYIYD), and 425-455 (YHKATVRDCSWHPNYPMLVSSSFDGEIVKWE).

This sequence belongs to the WD repeat LEC14B family.

This chain is LEC14B protein, found in Lithospermum erythrorhizon (Purple gromwell).